We begin with the raw amino-acid sequence, 125 residues long: MIVALGADLVEIARVERLLSRHGERALRRLFHEEEVAYALARQNPFPSLAARLAAKEAFQKCWPESLSWKEVWVGMEGKRPALRFAPRIEARMAEEGLFAHLSLSHERSHALAVVVLEARARGGG.

Residues Asp8 and Glu57 each coordinate Mg(2+).

Belongs to the P-Pant transferase superfamily. AcpS family. The cofactor is Mg(2+).

The protein resides in the cytoplasm. The catalysed reaction is apo-[ACP] + CoA = holo-[ACP] + adenosine 3',5'-bisphosphate + H(+). Its function is as follows. Transfers the 4'-phosphopantetheine moiety from coenzyme A to a Ser of acyl-carrier-protein. The polypeptide is Holo-[acyl-carrier-protein] synthase (Thermus thermophilus (strain ATCC BAA-163 / DSM 7039 / HB27)).